A 272-amino-acid chain; its full sequence is Putative pyruvate, phosphate dikinase regulatory protein 2 (272 aa).

ADP is bound at residue 154–161; it reads GVSRTSKT.

The protein belongs to the pyruvate, phosphate/water dikinase regulatory protein family. PDRP subfamily.

It carries out the reaction N(tele)-phospho-L-histidyl/L-threonyl-[pyruvate, phosphate dikinase] + ADP = N(tele)-phospho-L-histidyl/O-phospho-L-threonyl-[pyruvate, phosphate dikinase] + AMP + H(+). The enzyme catalyses N(tele)-phospho-L-histidyl/O-phospho-L-threonyl-[pyruvate, phosphate dikinase] + phosphate + H(+) = N(tele)-phospho-L-histidyl/L-threonyl-[pyruvate, phosphate dikinase] + diphosphate. Functionally, bifunctional serine/threonine kinase and phosphorylase involved in the regulation of the pyruvate, phosphate dikinase (PPDK) by catalyzing its phosphorylation/dephosphorylation. The protein is Putative pyruvate, phosphate dikinase regulatory protein 2 of Staphylococcus epidermidis (strain ATCC 35984 / DSM 28319 / BCRC 17069 / CCUG 31568 / BM 3577 / RP62A).